Here is a 347-residue protein sequence, read N- to C-terminus: Ultraviolet-sensitive opsin (347 aa).

The Extracellular segment spans residues 1–37 (MSGEEEFYLFKNGSIGGPWDGPQYHIAPPWAFYLQTA). N12 carries N-linked (GlcNAc...) asparagine glycosylation. A helical transmembrane segment spans residues 38–58 (FMGFVFMVGTPLNAIVLVVTI). The Cytoplasmic portion of the chain corresponds to 59–69 (KYKKLRQPLNY). The helical transmembrane segment at 70 to 90 (ILVNISFCGFLACIICIFTVF) threads the bilayer. Residues 91–106 (VSSSQGYFVFGKHVCA) lie on the Extracellular side of the membrane. Cysteines 105 and 182 form a disulfide. Residues 107 to 127 (FEGFMGATAGLVTGWSLAFLA) form a helical membrane-spanning segment. Residues 128–147 (FERYIVICKPLGNFRFTAKH) are Cytoplasmic-facing. A helical membrane pass occupies residues 148-168 (ALVVVVATWVIGIGVAIPPFF). Residues 169-197 (GWSRYVPEGLQCSCGPDWYTVGTKYRSEY) are Extracellular-facing. The chain crosses the membrane as a helical span at residues 198-218 (YTWFLFIFCFIVPLSLIIFSY). Residues 219–247 (SQLLSALRAVAAQQQESATTQKAEREVSR) are Cytoplasmic-facing. A helical transmembrane segment spans residues 248–268 (MVVVMVGSFCVCYVPYAALAM). Over 269–282 (YMVNNREHGIDLRL) the chain is Extracellular. Residues 283–303 (VTIPAFFSKSSCVYNPIIYCF) form a helical membrane-spanning segment. Position 291 is an N6-(retinylidene)lysine (K291). Residues 304–347 (MNKQFRGCIMEMVCGKPMTDDSDMSSSAQRTEVSSVSSSQVSPS) are Cytoplasmic-facing. C317 is lipidated: S-palmitoyl cysteine. A disordered region spans residues 324 to 347 (DSDMSSSAQRTEVSSVSSSQVSPS). Residues 328–347 (SSSAQRTEVSSVSSSQVSPS) show a composition bias toward low complexity.

It belongs to the G-protein coupled receptor 1 family. Opsin subfamily. Phosphorylated on some or all of the serine and threonine residues present in the C-terminal region. As to expression, cone photoreceptor cells.

Its subcellular location is the membrane. Functionally, visual pigments are the light-absorbing molecules that mediate vision. They consist of an apoprotein, opsin, covalently linked to cis-retinal. The chain is Ultraviolet-sensitive opsin from Melopsittacus undulatus (Budgerigar).